The following is a 1306-amino-acid chain: Angiotensin-converting enzyme (1306 aa).

The first 29 residues, 1–29, serve as a signal peptide directing secretion; it reads MGAASGRRGPGLLLPLPLLLLLPPQPALA. Topologically, residues 30–1256 are extracellular; that stretch reads LDPGLQPGNF…GLDLDAQQAR (1227 aa). 9 N-linked (GlcNAc...) asparagine glycosylation sites follow: asparagine 38, asparagine 54, asparagine 74, glutamate 103, asparagine 111, isoleucine 121, tyrosine 140, asparagine 146, and asparagine 160. 2 consecutive Peptidase M2 domains span residues 40–624 and 643–1222; these read SADE…LGWP and VTDE…LGWP. An intrachain disulfide couples cysteine 157 to cysteine 165. Tyrosine 231 contributes to the chloride binding site. N-linked (GlcNAc...) asparagine glycosylation is found at asparagine 318 and asparagine 368. Cysteine 359 and cysteine 377 are joined by a disulfide. Histidine 390 is a binding site for Zn(2+). The active-site Proton acceptor 1 is glutamate 391. Zn(2+) is bound by residues histidine 394, proline 414, glutamate 418, and arginine 442. 2 N-linked (GlcNAc...) asparagine glycosylation sites follow: asparagine 445 and asparagine 509. Histidine 520 functions as the Proton donor 1 in the catalytic mechanism. Arginine 529 is a binding site for chloride. A disulfide bridge links cysteine 545 with cysteine 557. Residues asparagine 617 and asparagine 677 are each glycosylated (N-linked (GlcNAc...) asparagine). N-linked (GlcNAc...) (complex) asparagine glycosylation is found at asparagine 695 and asparagine 714. Residues cysteine 757 and cysteine 763 are joined by a disulfide bond. An N-linked (GlcNAc...) asparagine; partial glycan is attached at asparagine 760. Positions 791 and 829 each coordinate chloride. Asparagine 942 carries an N-linked (GlcNAc...) asparagine; partial glycan. Cysteine 957 and cysteine 975 form a disulfide bridge. Position 988 (histidine 988) interacts with Zn(2+). Catalysis depends on glutamate 989, which acts as the Proton acceptor 2. 2 residues coordinate Zn(2+): histidine 992 and glutamate 1016. 2 residues coordinate chloride: tryptophan 1090 and arginine 1094. Residue histidine 1118 is the Proton donor 2 of the active site. Arginine 1127 lines the chloride pocket. Cysteine 1143 and cysteine 1155 are oxidised to a cystine. Residue asparagine 1191 is glycosylated (N-linked (GlcNAc...) asparagine; partial). Positions 1215–1256 are juxtamembrane stalk; the sequence is HGEKLGWPQYNWTPNSARSEGPLPDSGRVSFLGLDLDAQQAR. Residues 1257–1277 form a helical membrane-spanning segment; that stretch reads VGQWLLLFLGIALLVATLGLS. Topologically, residues 1278 to 1306 are cytoplasmic; sequence QRLFSIRHRSLHRHSHGPQFGSEVELRHS. Serine 1299 bears the Phosphoserine mark.

This sequence belongs to the peptidase M2 family. Monomer and homodimer; homodimerizes following binding to an inhibitor. Interacts with calmodulin (CALM1, CALM2 or CALM3); interaction takes place in the cytoplasmic region and regulates phosphorylation and proteolytic cleavage. It depends on Zn(2+) as a cofactor. Requires chloride as cofactor. In terms of processing, produced following proteolytic cleavage by secretase enzymes that cleave the transmembrane form in the juxtamembrane stalk region upstream of the transmembrane region. Cleavage can take place at different sites of the juxtamembrane stalk region. Post-translationally, phosphorylated by CK2 on Ser-1299; which allows membrane retention. Phosphorylated on tyrosine residues on its extracellular part, promoting cleavage by secretase enzymes and formation of the soluble form (Angiotensin-converting enzyme, soluble form). Ubiquitously expressed, with highest levels in lung, kidney, heart, gastrointestinal system and prostate. In terms of tissue distribution, specifically expressed in spermatocytes and adult testis.

The protein resides in the cell membrane. It localises to the cytoplasm. The protein localises to the secreted. The enzyme catalyses Release of a C-terminal dipeptide, oligopeptide-|-Xaa-Yaa, when Xaa is not Pro, and Yaa is neither Asp nor Glu. Thus, conversion of angiotensin I to angiotensin II, with increase in vasoconstrictor activity, but no action on angiotensin II.. The catalysed reaction is angiotensin I + H2O = L-histidyl-L-leucine + angiotensin II. It carries out the reaction bradykinin + H2O = L-Phe-L-Arg + bradykinin(1-7). It catalyses the reaction substance P + H2O = substance P(1-9) + L-Leu-L-Met-NH2. The enzyme catalyses substance P + H2O = substance P(1-8) + Gly-L-Leu-L-Met-NH2. The catalysed reaction is substance P + H2O = L-Phe-L-Phe-Gly-L-Leu-L-Met-NH2 + substance P(1-6). It carries out the reaction neurotensin + H2O = neurotensin(1-11) + L-isoleucyl-L-leucine. It catalyses the reaction goralatide + H2O = N-acetyl-L-seryl-L-aspartate + L-lysyl-L-proline. The enzyme catalyses Met-enkephalin + H2O = L-phenylalanyl-L-methionine + L-tyrosylglycylglycine. The catalysed reaction is Leu-enkephalin + H2O = L-tyrosylglycylglycine + L-phenylalanyl-L-leucine. It carries out the reaction Met-enkephalin-Arg-Phe + H2O = L-arginyl-L-phenylalanine + Met-enkephalin. Its activity is regulated as follows. The dipeptidyl carboxypeptidase activity is strongly activated by chloride. The dipeptidyl carboxypeptidase activity is specifically inhibited by lisinopril, captopril and enalaprilat. With respect to regulation, strongly inhibited by lisinopril and captopril. Functionally, dipeptidyl carboxypeptidase that removes dipeptides from the C-terminus of a variety of circulating hormones, such as angiotensin I, bradykinin or enkephalins, thereby playing a key role in the regulation of blood pressure, electrolyte homeostasis or synaptic plasticity. Composed of two similar catalytic domains, each possessing a functional active site, with different selectivity for substrates. Plays a major role in the angiotensin-renin system that regulates blood pressure and sodium retention by the kidney by converting angiotensin I to angiotensin II, resulting in an increase of the vasoconstrictor activity of angiotensin. Also able to inactivate bradykinin, a potent vasodilator, and therefore enhance the blood pressure response. Acts as a regulator of synaptic transmission by mediating cleavage of neuropeptide hormones, such as substance P, neurotensin or enkephalins. Catalyzes degradation of different enkephalin neuropeptides (Met-enkephalin, Leu-enkephalin, Met-enkephalin-Arg-Phe and possibly Met-enkephalin-Arg-Gly-Leu). Acts as a regulator of synaptic plasticity in the nucleus accumbens of the brain by mediating cleavage of Met-enkephalin-Arg-Phe, a strong ligand of Mu-type opioid receptor OPRM1, into Met-enkephalin. Met-enkephalin-Arg-Phe cleavage by ACE decreases activation of OPRM1, leading to long-term synaptic potentiation of glutamate release. Also acts as a regulator of hematopoietic stem cell differentiation by mediating degradation of hemoregulatory peptide N-acetyl-SDKP (AcSDKP). Acts as a regulator of cannabinoid signaling pathway by mediating degradation of hemopressin, an antagonist peptide of the cannabinoid receptor CNR1. Involved in amyloid-beta metabolism by catalyzing degradation of Amyloid-beta protein 40 and Amyloid-beta protein 42 peptides, thereby preventing plaque formation. Catalyzes cleavage of cholecystokinin (maturation of Cholecystokinin-8 and Cholecystokinin-5) and Gonadoliberin-1 (both maturation and degradation) hormones. Degradation of hemoregulatory peptide N-acetyl-SDKP (AcSDKP) and amyloid-beta proteins is mediated by the N-terminal catalytic domain, while angiotensin I and cholecystokinin cleavage is mediated by the C-terminal catalytic region. Soluble form that is released in blood plasma and other body fluids following proteolytic cleavage in the juxtamembrane stalk region. In terms of biological role, isoform produced by alternative promoter usage that is specifically expressed in spermatocytes and adult testis, and which is required for male fertility. In contrast to somatic isoforms, only contains one catalytic domain. Acts as a dipeptidyl carboxypeptidase that removes dipeptides from the C-terminus of substrates. The identity of substrates that are needed for male fertility is unknown. May also have a glycosidase activity which releases GPI-anchored proteins from the membrane by cleaving the mannose linkage in the GPI moiety. The GPIase activity was reported to be essential for the egg-binding ability of the sperm. This activity is however unclear and has been challenged by other groups, suggesting that it may be indirect. In Homo sapiens (Human), this protein is Angiotensin-converting enzyme.